Here is a 198-residue protein sequence, read N- to C-terminus: Putative protein-methionine-sulfoxide reductase subunit YedZ1 (198 aa).

4 helical membrane passes run 12 to 32, 63 to 83, 124 to 144, and 167 to 187; these read WLRV…MSGW, FAAM…NIFS, AAYL…LVLW, and FIGM…VALV.

Belongs to the HupC/HyaC/HydC family.

It is found in the cell inner membrane. Functionally, part of the YedY1-YedZ1 system that may repair oxidized proteins containing methionine sulfoxide residues (Met-O). The chain is Putative protein-methionine-sulfoxide reductase subunit YedZ1 from Azospira oryzae (strain ATCC BAA-33 / DSM 13638 / PS) (Dechlorosoma suillum).